Consider the following 157-residue polypeptide: Small ribosomal subunit protein uS7 (157 aa).

The protein belongs to the universal ribosomal protein uS7 family. In terms of assembly, part of the 30S ribosomal subunit. Contacts proteins S9 and S11.

One of the primary rRNA binding proteins, it binds directly to 16S rRNA where it nucleates assembly of the head domain of the 30S subunit. Is located at the subunit interface close to the decoding center, probably blocks exit of the E-site tRNA. The polypeptide is Small ribosomal subunit protein uS7 (Borreliella afzelii (strain PKo) (Borrelia afzelii)).